A 149-amino-acid chain; its full sequence is Ubiquitin-conjugating enzyme E2 pex4 (149 aa).

One can recognise a UBC core domain in the interval 1 to 149 (MAARLMKEYK…ARMYTRLYGC (149 aa)). Cys-86 serves as the catalytic Glycyl thioester intermediate.

The protein belongs to the ubiquitin-conjugating enzyme family.

The catalysed reaction is S-ubiquitinyl-[E1 ubiquitin-activating enzyme]-L-cysteine + [E2 ubiquitin-conjugating enzyme]-L-cysteine = [E1 ubiquitin-activating enzyme]-L-cysteine + S-ubiquitinyl-[E2 ubiquitin-conjugating enzyme]-L-cysteine.. It participates in protein modification; protein ubiquitination. Functionally, catalyzes the covalent attachment of ubiquitin to other proteins. Essential for peroxisome biogenesis. In Dictyostelium discoideum (Social amoeba), this protein is Ubiquitin-conjugating enzyme E2 pex4 (pex4).